We begin with the raw amino-acid sequence, 242 residues long: Spiralin (242 aa).

The signal sequence occupies residues 1–23; that stretch reads MKKLLSILAVFGVSAVGTTSVVA. Residue cysteine 24 is the site of N-palmitoyl cysteine attachment. Cysteine 24 carries S-diacylglycerol cysteine lipidation.

Belongs to the spiralin family. As to quaternary structure, seems to occur as dimer, tetramers, and large oligomers of identical chains. Palmitate and stearate are the major lipid components.

It localises to the cell membrane. Major membrane protein of spiroplasma. The polypeptide is Spiralin (spi) (Spiroplasma melliferum).